A 144-amino-acid polypeptide reads, in one-letter code: Large ribosomal subunit protein uL16 (144 aa).

Belongs to the universal ribosomal protein uL16 family. Part of the 50S ribosomal subunit.

Functionally, binds 23S rRNA and is also seen to make contacts with the A and possibly P site tRNAs. The chain is Large ribosomal subunit protein uL16 from Natranaerobius thermophilus (strain ATCC BAA-1301 / DSM 18059 / JW/NM-WN-LF).